The sequence spans 1162 residues: Eukaryotic translation initiation factor 2-alpha kinase (1162 aa).

Positions 1–39 (MQDDLDGIVRHRRRSLSFLQIVTLTMAGLVAFDPAQVLA) are cleaved as a signal peptide. The Lumenal segment spans residues 40-537 (GHPTTDSELQ…DDIDAPVKVV (498 aa)). Residues Asn193, Asn260, Asn353, Asn461, Asn505, and Asn516 are each glycosylated (N-linked (GlcNAc...) asparagine). Residues 498-517 (TAPTSPTNATSEGTEATGNH) are disordered. Over residues 499–517 (APTSPTNATSEGTEATGNH) the composition is skewed to polar residues. Residues 538 to 558 (ILSLWFWWKEIVVIAFTSAVI) traverse the membrane as a helical segment. Residues 559-1162 (LNIFMGQRNQ…TFSSSSEPHQ (604 aa)) are Cytoplasmic-facing. Ser624 is modified (phosphoserine). The Protein kinase domain maps to 642–1130 (FELMQCLGRG…LRNILQLPHL (489 aa)). Residues 648-656 (LGRGGFGVV) and Lys671 contribute to the ATP site. Ser797 bears the Phosphoserine mark. The tract at residues 801-839 (FRSESQSAALRAEEEDDTDDDYEEDEEQQGDHEKRHRSS) is disordered. Over residues 813–828 (EEEDDTDDDYEEDEEQ) the composition is skewed to acidic residues. Thr818 carries the phosphothreonine modification. The Proton acceptor role is filled by Asp980. Thr1028 carries the post-translational modification Phosphothreonine. The segment at 1135–1162 (QSEQAELAERARRLSRSRTFSSSSEPHQ) is disordered. Positions 1151 to 1162 (SRTFSSSSEPHQ) are enriched in low complexity.

The protein belongs to the protein kinase superfamily. Ser/Thr protein kinase family. GCN2 subfamily. Forms dimers with HSPA5/BIP in resting cells. Oligomerizes in ER-stressed cells. Autophosphorylated. In terms of processing, N-glycosylated.

It localises to the endoplasmic reticulum membrane. The catalysed reaction is L-seryl-[protein] + ATP = O-phospho-L-seryl-[protein] + ADP + H(+). It carries out the reaction L-threonyl-[protein] + ATP = O-phospho-L-threonyl-[protein] + ADP + H(+). With respect to regulation, perturbation in protein folding in the endoplasmic reticulum (ER) promotes reversible dissociation from HSPA5/BIP and oligomerization, resulting in transautophosphorylation and kinase activity induction. Functionally, phosphorylates the alpha subunit of eukaryotic translation-initiation factor 2 (EIF2), leading to its inactivation and thus to a rapid reduction of translational initiation and repression of global protein synthesis. The protein is Eukaryotic translation initiation factor 2-alpha kinase (PEK) of Drosophila melanogaster (Fruit fly).